The following is a 220-amino-acid chain: StAR-related lipid transfer protein 6 (220 aa).

Positions 1–208 constitute an START domain; the sequence is MDFKAIAQQT…AKDGIKAHRT (208 aa).

Functionally, may be involved in the intracellular transport of sterols or other lipids. May bind cholesterol or other sterols. This is StAR-related lipid transfer protein 6 (STARD6) from Homo sapiens (Human).